A 349-amino-acid polypeptide reads, in one-letter code: 1-acylglycerol-3-phosphate O-acyltransferase ABHD5 (349 aa).

The residue at position 2 (alanine 2) is an N-acetylalanine. The AB hydrolase-1 domain occupies 77-185 (PLVLLHGFGG…VEPWGFPERP (109 aa)). Positions 327-332 (HYVYAD) match the HXXXXD motif motif.

This sequence belongs to the peptidase S33 family. ABHD4/ABHD5 subfamily. In terms of assembly, interacts with ADRP, PLIN and PNPLA2. Interacts with PLIN5; promotes interaction with PNPLA2.

The protein localises to the cytoplasm. It is found in the lipid droplet. It catalyses the reaction a 1-acyl-sn-glycero-3-phosphate + an acyl-CoA = a 1,2-diacyl-sn-glycero-3-phosphate + CoA. The enzyme catalyses 1-(9Z-octadecenoyl)-sn-glycero-3-phosphate + (9Z)-octadecenoyl-CoA = 1,2-di-(9Z-octadecenoyl)-sn-glycero-3-phosphate + CoA. It carries out the reaction 1-(9Z-octadecenoyl)-sn-glycero-3-phosphate + hexadecanoyl-CoA = 1-(9Z)-octadecenoyl-2-hexadecanoyl-sn-glycero-3-phosphate + CoA. The catalysed reaction is 1-(9Z-octadecenoyl)-sn-glycero-3-phosphate + octadecanoyl-CoA = 1-(9Z-octadecenoyl)-2-octadecanoyl-sn-glycero-3-phosphate + CoA. It catalyses the reaction 1-(9Z-octadecenoyl)-sn-glycero-3-phosphate + (5Z,8Z,11Z,14Z)-eicosatetraenoyl-CoA = 1-(9Z)-octadecenoyl-2-(5Z,8Z,11Z,14Z)-eicosatetraenoyl-sn-glycero-3-phosphate + CoA. The enzyme catalyses eicosanoyl-CoA + 1-(9Z-octadecenoyl)-sn-glycero-3-phosphate = 1-(9Z)-octadecenoyl-2-eicosanoyl-sn-glycero-3-phosphate + CoA. It carries out the reaction 1-hexadecanoyl-sn-glycero-3-phosphate + (9Z)-octadecenoyl-CoA = 1-hexadecanoyl-2-(9Z-octadecenoyl)-sn-glycero-3-phosphate + CoA. The catalysed reaction is 1-octadecanoyl-sn-glycero-3-phosphate + (9Z)-octadecenoyl-CoA = 1-octadecanoyl-2-(9Z-octadecenoyl)-sn-glycero-3-phosphate + CoA. It catalyses the reaction 1-(5Z,8Z,11Z,14Z-eicosatetraenoyl)-sn-glycero-3-phosphate + (9Z)-octadecenoyl-CoA = 1-(5Z,8Z,11Z,14Z)-eicosatetraenoyl-2-(9Z)-octadecenoyl-sn-glycero-3-phosphate + CoA. Acyltransferase activity is inhibited by detergents such as Triton X-100 and 3-[(3-cholamidopropyl)dimethylammonio]-1-propanesulfonate (CHAPS). Acyltransferase activity is inhibited by the presence of magnesium and calcium. Functionally, coenzyme A-dependent lysophosphatidic acid acyltransferase that catalyzes the transfer of an acyl group on a lysophosphatidic acid. Functions preferentially with 1-oleoyl-lysophosphatidic acid followed by 1-palmitoyl-lysophosphatidic acid, 1-stearoyl-lysophosphatidic acid and 1-arachidonoyl-lysophosphatidic acid as lipid acceptor. Functions preferentially with arachidonoyl-CoA followed by oleoyl-CoA as acyl group donors. Functions in phosphatidic acid biosynthesis. May regulate the cellular storage of triacylglycerol through activation of the phospholipase PNPLA2. Involved in keratinocyte differentiation. Regulates lipid droplet fusion. The chain is 1-acylglycerol-3-phosphate O-acyltransferase ABHD5 from Sus scrofa (Pig).